Here is a 636-residue protein sequence, read N- to C-terminus: Threonine--tRNA ligase (636 aa).

A TGS domain is found at 1 to 63 (MINITTSFPN…SKDGSVDPVT (63 aa)). The segment at 244–535 (DHRKIAKDLG…LIEHYAGNIP (292 aa)) is catalytic. Zn(2+)-binding residues include cysteine 335, histidine 386, and histidine 512.

The protein belongs to the class-II aminoacyl-tRNA synthetase family. Homodimer. Requires Zn(2+) as cofactor.

The protein resides in the cytoplasm. It catalyses the reaction tRNA(Thr) + L-threonine + ATP = L-threonyl-tRNA(Thr) + AMP + diphosphate + H(+). Functionally, catalyzes the attachment of threonine to tRNA(Thr) in a two-step reaction: L-threonine is first activated by ATP to form Thr-AMP and then transferred to the acceptor end of tRNA(Thr). Also edits incorrectly charged L-seryl-tRNA(Thr). The protein is Threonine--tRNA ligase of Anaplasma marginale (strain Florida).